The chain runs to 129 residues: Small ribosomal subunit protein uS11 (129 aa).

Belongs to the universal ribosomal protein uS11 family. As to quaternary structure, part of the 30S ribosomal subunit. Interacts with proteins S7 and S18. Binds to IF-3.

Located on the platform of the 30S subunit, it bridges several disparate RNA helices of the 16S rRNA. Forms part of the Shine-Dalgarno cleft in the 70S ribosome. This chain is Small ribosomal subunit protein uS11, found in Mycoplasma mycoides subsp. mycoides SC (strain CCUG 32753 / NCTC 10114 / PG1).